A 143-amino-acid chain; its full sequence is Ribosome maturation factor RimP (143 aa).

It belongs to the RimP family.

It localises to the cytoplasm. Its function is as follows. Required for maturation of 30S ribosomal subunits. The sequence is that of Ribosome maturation factor RimP from Borrelia hermsii (strain HS1 / DAH).